The chain runs to 61 residues: Small ribosomal subunit protein uS14 (61 aa).

Zn(2+) is bound by residues Cys-24, Cys-27, Cys-40, and Cys-43.

This sequence belongs to the universal ribosomal protein uS14 family. Zinc-binding uS14 subfamily. As to quaternary structure, part of the 30S ribosomal subunit. Contacts proteins S3 and S10. It depends on Zn(2+) as a cofactor.

Its function is as follows. Binds 16S rRNA, required for the assembly of 30S particles and may also be responsible for determining the conformation of the 16S rRNA at the A site. This is Small ribosomal subunit protein uS14 from Pseudothermotoga lettingae (strain ATCC BAA-301 / DSM 14385 / NBRC 107922 / TMO) (Thermotoga lettingae).